The primary structure comprises 312 residues: MRLVFAGTPEPALASLRRLIESPSHDVIAVLTRPDAASGRRGKPQPSPVAREAAERGIPVLRPSRPNSAEFVAELSDLAPECCAVVAYGALLGGPLLAVPPHGWVNLHFSLLPAWRGAAPVQAAIAAGDTITGATTFQIEPSLDSGPIYGVVTEVIQPTDTAGDLLKRLAVSGAALLSTTLDGIADQRLTPRPQPADGVSVAPKITVANARVRWDLPAAVVERRIRAVTPNPGAWTLIGDLRVKLGPVHLDAAHRPSKPLPPGGIHVERTSVWIGTGSEPVRLGQIQPPGKKLMNAADWARGARLDLAARAT.

The disordered stretch occupies residues 34 to 54 (PDAASGRRGKPQPSPVAREAA). Residue 110–113 (SLLP) participates in (6S)-5,6,7,8-tetrahydrofolate binding.

This sequence belongs to the Fmt family.

It carries out the reaction L-methionyl-tRNA(fMet) + (6R)-10-formyltetrahydrofolate = N-formyl-L-methionyl-tRNA(fMet) + (6S)-5,6,7,8-tetrahydrofolate + H(+). In terms of biological role, attaches a formyl group to the free amino group of methionyl-tRNA(fMet). The formyl group appears to play a dual role in the initiator identity of N-formylmethionyl-tRNA by promoting its recognition by IF2 and preventing the misappropriation of this tRNA by the elongation apparatus. This is Methionyl-tRNA formyltransferase from Mycobacterium tuberculosis (strain ATCC 25177 / H37Ra).